A 373-amino-acid chain; its full sequence is tRNA-specific 2-thiouridylase MnmA (373 aa).

Residues 12-19 (GMSGGVDS) and methionine 38 contribute to the ATP site. An interaction with target base in tRNA region spans residues 98 to 100 (NPD). Cysteine 103 functions as the Nucleophile in the catalytic mechanism. Cysteine 103 and cysteine 200 are disulfide-bonded. Position 127 (glycine 127) interacts with ATP. Residues 150-152 (KDQ) form an interaction with tRNA region. The active-site Cysteine persulfide intermediate is cysteine 200. Positions 312–313 (RY) are interaction with tRNA.

This sequence belongs to the MnmA/TRMU family.

Its subcellular location is the cytoplasm. It carries out the reaction S-sulfanyl-L-cysteinyl-[protein] + uridine(34) in tRNA + AH2 + ATP = 2-thiouridine(34) in tRNA + L-cysteinyl-[protein] + A + AMP + diphosphate + H(+). In terms of biological role, catalyzes the 2-thiolation of uridine at the wobble position (U34) of tRNA, leading to the formation of s(2)U34. In Streptococcus pyogenes serotype M49 (strain NZ131), this protein is tRNA-specific 2-thiouridylase MnmA.